We begin with the raw amino-acid sequence, 1758 residues long: RanBP2-like and GRIP domain-containing protein 4 (1758 aa).

Ser-21 is modified (phosphoserine). TPR repeat units follow at residues 60 to 93 (PRAH…NPTQ) and 584 to 617 (QKMG…LKII). The disordered stretch occupies residues 761–805 (DPLYKNGSLRNADSEIKHSTPSPTKYSLSPSKSYKYSPKTPPRWA). Residues 779-798 (STPSPTKYSLSPSKSYKYSP) show a composition bias toward low complexity. Residues 1037 to 1173 (HFEPVVQMPE…FEECQQLLLD (137 aa)) form the RanBD1 1 domain. Disordered regions lie at residues 1213–1249 (QTKV…TLEW) and 1295–1332 (SFKS…ERDG). The segment covering 1236–1245 (IKPNPENTGP) has biased composition (polar residues). Low complexity predominate over residues 1295-1309 (SFKSALSPSKSPAKL). The segment covering 1318-1330 (TDEESDVTQEEER) has biased composition (acidic residues). The RanBD1 2 domain occupies 1334–1470 (YFEPVVPLPD…FDEAKTAQEK (137 aa)). Over residues 1583-1594 (SETSSVAQSGSE) the composition is skewed to polar residues. The interval 1583–1621 (SETSSVAQSGSESKVEPKKCELSKNSDIEQSSDSKVKNL) is disordered. A compositionally biased stretch (basic and acidic residues) spans 1595-1618 (SKVEPKKCELSKNSDIEQSSDSKV). Residues 1703–1753 (QEESAANVEHLKNVLLQFIFLKPGSERERLLPVINTMLQLSPEEKGKLAAV) form the GRIP domain.

The chain is RanBP2-like and GRIP domain-containing protein 4 (RGPD4) from Homo sapiens (Human).